A 256-amino-acid polypeptide reads, in one-letter code: MIILITNDDGFESEGIRLLKEIAQNFASEVWIVAPDADRSGAARSLDYPVKQFIKISQHSEREFSVSGTPADCVIIALNKIMNKKPDLILSGVNIGSNVGDDICYSGTIGAAMEGAARSIPSIALSQVYHDKIDWNNTKIFAPKVIAKLMKVGWPKDIVMSINFPATEKVKGVEFAEQGEYNIDGDLTFTENLNGSLSLNWSREHSGSGSVDKIKGGFITITPIKLDFTDYDILNAMKNSCAEEFSSIANTPIASD.

A divalent metal cation contacts are provided by D8, D9, S40, and N94.

The protein belongs to the SurE nucleotidase family. It depends on a divalent metal cation as a cofactor.

It is found in the cytoplasm. The catalysed reaction is a ribonucleoside 5'-phosphate + H2O = a ribonucleoside + phosphate. Its function is as follows. Nucleotidase that shows phosphatase activity on nucleoside 5'-monophosphates. The chain is 5'-nucleotidase SurE from Wolbachia pipientis subsp. Culex pipiens (strain wPip).